Consider the following 286-residue polypeptide: NAD kinase (286 aa).

The active-site Proton acceptor is the aspartate 74. Residues 74-75 (DG), 148-149 (ND), aspartate 178, alanine 186, 189-194 (TAYNLS), and glutamine 244 each bind NAD(+).

It belongs to the NAD kinase family. A divalent metal cation serves as cofactor.

The protein resides in the cytoplasm. The enzyme catalyses NAD(+) + ATP = ADP + NADP(+) + H(+). Its function is as follows. Involved in the regulation of the intracellular balance of NAD and NADP, and is a key enzyme in the biosynthesis of NADP. Catalyzes specifically the phosphorylation on 2'-hydroxyl of the adenosine moiety of NAD to yield NADP. The sequence is that of NAD kinase from Campylobacter jejuni subsp. jejuni serotype O:2 (strain ATCC 700819 / NCTC 11168).